The sequence spans 288 residues: Mortality factor 4-like protein 2 (288 aa).

A compositionally biased stretch (polar residues) spans Met1–Ser15. A disordered region spans residues Met1–Phe115. Ser71 is subject to Phosphoserine. Residues Ser117–Leu288 form the MRG domain.

As to quaternary structure, component of the NuA4 histone acetyltransferase complex which contains the catalytic subunit KAT5/TIP60 and the subunits EP400, TRRAP/PAF400, BRD8/SMAP, EPC1, DMAP1/DNMAP1, RUVBL1/TIP49, RUVBL2, ING3, actin, ACTL6A/BAF53A, MORF4L1/MRG15, MORF4L2/MRGX, MRGBP, YEATS4/GAS41 and VPS72/YL1. The NuA4 complex interacts with MYC and the adenovirus E1A protein. MORF4L1 may also participate in the formation of NuA4 related complexes which lack the KAT5/TIP60 catalytic subunit, but which include the SWI/SNF related protein SRCAP. Component of the MSIN3A histone deacetylase complex, which includes SIN3A, HDAC2, ARID4B, MORF4L1, RBBP4/RbAp48, and RBBP7/RbAp46. Interacts with MRFAP1 and RB1. May also interact with one or more as yet undefined members of the TLE (transducin-like enhancer of split) family of transcriptional repressors.

It is found in the nucleus. Functionally, component of the NuA4 histone acetyltransferase complex which is involved in transcriptional activation of select genes principally by acetylation of nucleosomal histone H4 and H2A. This modification may both alter nucleosome - DNA interactions and promote interaction of the modified histones with other proteins which positively regulate transcription. This complex may be required for the activation of transcriptional programs associated with oncogene and proto-oncogene mediated growth induction, tumor suppressor mediated growth arrest and replicative senescence, apoptosis, and DNA repair. The NuA4 complex ATPase and helicase activities seem to be, at least in part, contributed by the association of RUVBL1 and RUVBL2 with EP400. NuA4 may also play a direct role in DNA repair when directly recruited to sites of DNA damage. Also a component of the MSIN3A complex which acts to repress transcription by deacetylation of nucleosomal histones. The sequence is that of Mortality factor 4-like protein 2 (Morf4l2) from Mus musculus (Mouse).